The chain runs to 167 residues: Large ribosomal subunit protein uL10 (167 aa).

It belongs to the universal ribosomal protein uL10 family. As to quaternary structure, part of the ribosomal stalk of the 50S ribosomal subunit. The N-terminus interacts with L11 and the large rRNA to form the base of the stalk. The C-terminus forms an elongated spine to which L12 dimers bind in a sequential fashion forming a multimeric L10(L12)X complex.

In terms of biological role, forms part of the ribosomal stalk, playing a central role in the interaction of the ribosome with GTP-bound translation factors. This is Large ribosomal subunit protein uL10 from Lactiplantibacillus plantarum (strain ATCC BAA-793 / NCIMB 8826 / WCFS1) (Lactobacillus plantarum).